Consider the following 217-residue polypeptide: MDAPRRFPTLVQLMQPKAMPVEVLGHLPKRFSWFHSEFLKNPKVVRLEVWLVEKIFGRGGERIPHVQGMSQILIHVNRLDPNGEAEILVFGRPSYQEDTIKMIMNLADYHRQLQAKGSGKALAQDVATQKAETQRSSIEVREAGTQRSVEVREAGTQRSVEVQEVGTQGSPVEVQEAGTQQSLQAANKSGTQRSPEAASKAVTQRFREDARDPVTRL.

Residues 1 to 40 (MDAPRRFPTLVQLMQPKAMPVEVLGHLPKRFSWFHSEFLK) are involved in RNA binding. In terms of domain architecture, KH; atypical spans 40-103 (KNPKVVRLEV…SYQEDTIKMI (64 aa)). Residues 129–217 (QKAETQRSSI…EDARDPVTRL (89 aa)) are disordered. A compositionally biased stretch (basic and acidic residues) spans 138 to 155 (IEVREAGTQRSVEVREAG). 2 positions are modified to phosphothreonine; by ATM: threonine 145 and threonine 156. Composition is skewed to polar residues over residues 156-170 (TQRS…TQGS) and 177-194 (AGTQ…TQRS). At serine 182 the chain carries Phosphoserine. Over residues 205 to 217 (RFREDARDPVTRL) the composition is skewed to basic and acidic residues.

Belongs to the KHDC1 family. Component of the subcortical maternal complex (SCMC), at least composed of NLRP5, KHDC3L, OOEP, and TLE6 isoform 1. Within the complex, interacts with NLRP5, KHDC3L and TLE6 isoform 1. The SCMC may facilitate translocation of its components between the nuclear and cytoplasmic compartments. Forms a scaffold complex with OOEP/FLOPED, and interacts with BLM and TRIM25 at DNA replication forks. Interacts with PARP1; the interaction is increased following the formation of DNA double-strand breaks. Interacts with NUMA1. In terms of tissue distribution, expression appears to be maximal in germinal vesicle oocytes, it tails off through metaphase II oocytes and is undetectable following the completion of the oocyte to embryo transition.

It localises to the cytoplasm. It is found in the cell cortex. The protein resides in the nucleus. The protein localises to the mitochondrion. Its subcellular location is the cytoskeleton. It localises to the microtubule organizing center. It is found in the centrosome. The protein resides in the chromosome. In terms of biological role, component of the subcortical maternal complex (SCMC), a multiprotein complex that plays a key role in early embryonic development. The SCMC complex is a structural constituent of cytoplasmic lattices, which consist in fibrous structures found in the cytoplasm of oocytes and preimplantation embryos. They are required to store maternal proteins critical for embryonic development, such as proteins that control epigenetic reprogramming of the preimplantation embryo, and prevent their degradation or activation. KHDC3 ensures proper spindle assembly by regulating the localization of AURKA via RHOA signaling and of PLK1 via a RHOA-independent process. Required for the localization of MAD2L1 to kinetochores to enable spindle assembly checkpoint function. As part of the OOEP-KHDC3 scaffold, recruits BLM and TRIM25 to DNA replication forks, thereby promoting the ubiquitination of BLM by TRIM25, enhancing BLM retainment at replication forks and therefore promoting stalled replication fork restart. Regulates homologous recombination-mediated DNA repair via recruitment of RAD51 to sites of DNA double-strand breaks, and sustainment of PARP1 activity, which in turn modulates downstream ATM or ATR activation. Activation of ATM or ATR in response to DNA double-strand breaks may be cell-type specific. Its role in DNA double-strand break repair is independent of its role in restarting stalled replication forks. Promotes neural stem cell neurogenesis and neuronal differentiation in the hippocampus. May regulate normal development of learning, memory and anxiety. Capable of binding RNA. This Homo sapiens (Human) protein is KH domain-containing protein 3.